The chain runs to 615 residues: Alpha-terpinene synthase TPS33PK, chloroplastic (615 aa).

The transit peptide at 1–33 (MFCRLGVHQFSPLSLILNTTKLARASTLSSACY) directs the protein to the chloroplast. The (2E)-geranyl diphosphate site is built by Glu-334, Val-371, Leu-375, Leu-513, and Ser-516. 2 residues coordinate Mg(2+): Val-371 and Leu-375. The DDXXD motif signature appears at 371–375 (VYGTL). Positions 516, 520, and 524 each coordinate Mg(2+).

Belongs to the terpene synthase family. Tpsb subfamily. The cofactor is Mg(2+). Mn(2+) serves as cofactor.

It localises to the plastid. It is found in the chloroplast. The catalysed reaction is (2E)-geranyl diphosphate = alpha-terpinene + diphosphate. It carries out the reaction (2E)-geranyl diphosphate = gamma-terpinene + diphosphate. Its pathway is secondary metabolite biosynthesis; terpenoid biosynthesis. Its function is as follows. Involved in monoterpene (C10) olefins biosynthesis, constituants of cannabinoids and terpenoids-rich resins. Catalyzes mainly the conversion of (2E)-geranyl diphosphate to alpha-terpinene and gamma-terpinene. The sequence is that of Alpha-terpinene synthase TPS33PK, chloroplastic from Cannabis sativa (Hemp).